A 349-amino-acid polypeptide reads, in one-letter code: B3 domain-containing protein At5g24050 (349 aa).

The segment at residues 240-341 is a DNA-binding region (TF-B3); sequence FNNLLRNDFL…ILCFAMEQSS (102 aa).

It localises to the nucleus. In Arabidopsis thaliana (Mouse-ear cress), this protein is B3 domain-containing protein At5g24050.